The chain runs to 300 residues: Cation-efflux pump FieF (300 aa).

A run of 4 helical transmembrane segments spans residues 12–32 (AAIA…FAWW), 39–59 (ILAA…NLLV), 82–102 (AALA…LTGI), and 114–134 (PGVG…LVSF). Positions 45 and 49 each coordinate Zn(2+). Zn(2+) contacts are provided by His153 and Asp157. The next 2 helical transmembrane spans lie at 156–176 (SDVM…YGWH) and 178–198 (ADAL…LRMG).

The protein belongs to the cation diffusion facilitator (CDF) transporter (TC 2.A.4) family. FieF subfamily. In terms of assembly, homodimer.

Its subcellular location is the cell inner membrane. The catalysed reaction is Zn(2+)(in) + H(+)(out) = Zn(2+)(out) + H(+)(in). It carries out the reaction Cd(2+)(in) + H(+)(out) = Cd(2+)(out) + H(+)(in). The enzyme catalyses Fe(2+)(in) + H(+)(out) = Fe(2+)(out) + H(+)(in). Functionally, divalent metal cation transporter which exports Zn(2+), Cd(2+) and possibly Fe(2+). May be involved in zinc and iron detoxification by efflux. This is Cation-efflux pump FieF from Escherichia coli O7:K1 (strain IAI39 / ExPEC).